A 350-amino-acid chain; its full sequence is UBX domain-containing protein 2B (350 aa).

Positions 1–29 are enriched in acidic residues; it reads MEERENSEEGDDGAGEEEEEDQGSGEDGG. Residues 1–46 form a disordered region; that stretch reads MEERENSEEGDDGAGEEEEEDQGSGEDGGEVGAEREQEAELKDSLR. The span at 32–45 shows a compositional bias: basic and acidic residues; that stretch reads GAEREQEAELKDSL. Residues 160–225 form the SEP domain; the sequence is EIQILLKLWS…MEDHQDQEYI (66 aa). The 78-residue stretch at 271–348 folds into the UBX domain; sequence EHVPTTKIQI…DILNTVILQR (78 aa).

Belongs to the NSFL1C family.

The protein resides in the nucleus. It localises to the cytoplasm. The protein localises to the cytosol. It is found in the endoplasmic reticulum. Its subcellular location is the golgi apparatus. The protein resides in the cytoskeleton. It localises to the microtubule organizing center. The protein localises to the centrosome. Functionally, adapter protein required for Golgi and endoplasmic reticulum biogenesis. Involved in Golgi and endoplasmic reticulum maintenance during interphase and in their reassembly at the end of mitosis. Regulates the centrosomal levels of kinase aurka-a/Aurora A during mitotic progression by promoting aurka-a removal from centrosomes in prophase. Also, regulates spindle orientation during mitosis. This chain is UBX domain-containing protein 2B (ubxn2b), found in Xenopus laevis (African clawed frog).